Reading from the N-terminus, the 455-residue chain is Asparagine--tRNA ligase (455 aa).

It belongs to the class-II aminoacyl-tRNA synthetase family. In terms of assembly, homodimer.

The protein resides in the cytoplasm. The enzyme catalyses tRNA(Asn) + L-asparagine + ATP = L-asparaginyl-tRNA(Asn) + AMP + diphosphate + H(+). The sequence is that of Asparagine--tRNA ligase from Lawsonia intracellularis (strain PHE/MN1-00).